We begin with the raw amino-acid sequence, 632 residues long: tRNA uridine 5-carboxymethylaminomethyl modification enzyme MnmG (632 aa).

15–20 (GAGHAG) is an FAD binding site. The segment at 205 to 231 (PRVDGNTIDYSKTQEEPGDKEPRHFSY) is disordered. Residues 216–228 (KTQEEPGDKEPRH) show a composition bias toward basic and acidic residues. 276 to 290 (GPRYCPSIEDKVVRF) contributes to the NAD(+) binding site.

The protein belongs to the MnmG family. As to quaternary structure, homodimer. Heterotetramer of two MnmE and two MnmG subunits. FAD serves as cofactor.

The protein resides in the cytoplasm. In terms of biological role, NAD-binding protein involved in the addition of a carboxymethylaminomethyl (cmnm) group at the wobble position (U34) of certain tRNAs, forming tRNA-cmnm(5)s(2)U34. This chain is tRNA uridine 5-carboxymethylaminomethyl modification enzyme MnmG, found in Lactobacillus johnsonii (strain CNCM I-12250 / La1 / NCC 533).